A 129-amino-acid chain; its full sequence is MKNNLREEKEVVFDGCMNVLSLPSGWKAITPKKNNATSEIIVLFIPPKASYHIILKYNKTKHCELFFSDHITGEQDIIYSQNAFFSHVINHTIALVDVLNKKSYASNVIKFLITMEGGGDILSESKRAP.

Positive regulatory protein of bfpA, the gene coding for the bundle-forming pilus of EPEC. In Escherichia coli O111:H-, this protein is Protein PerB (perB).